Reading from the N-terminus, the 135-residue chain is uncharacterized protein (135 aa).

This is an uncharacterized protein from Acanthamoeba polyphaga (Amoeba).